Here is a 233-residue protein sequence, read N- to C-terminus: Chalcone--flavanone isomerase (233 aa).

Substrate-binding residues include Thr-47, Asn-113, and Ser-192.

This sequence belongs to the chalcone isomerase family.

The enzyme catalyses a chalcone = a flavanone.. Its pathway is secondary metabolite biosynthesis; flavonoid biosynthesis. In terms of biological role, catalyzes the intramolecular cyclization of bicyclic chalcones into tricyclic (S)-flavanones. Responsible for the isomerization of 4,2',4',6'-tetrahydroxychalcone (also termed chalcone) into naringenin. The chain is Chalcone--flavanone isomerase (CHI) from Oryza sativa subsp. japonica (Rice).